Consider the following 277-residue polypeptide: Ribonuclease HII (277 aa).

In terms of domain architecture, RNase H type-2 spans 72 to 260 (EYIAGIDEAG…IKEMIEMKKE (189 aa)). A divalent metal cation-binding residues include aspartate 78, glutamate 79, and aspartate 170.

Belongs to the RNase HII family. Mn(2+) serves as cofactor. Requires Mg(2+) as cofactor.

It is found in the cytoplasm. The catalysed reaction is Endonucleolytic cleavage to 5'-phosphomonoester.. Functionally, endonuclease that specifically degrades the RNA of RNA-DNA hybrids. This chain is Ribonuclease HII, found in Geobacillus sp. (strain WCH70).